The chain runs to 146 residues: Ribosome-binding factor A (146 aa).

A disordered region spans residues 121–146 (KQQQFGSADDVTENDIDEADDTEGKA). A compositionally biased stretch (acidic residues) spans 130-146 (DVTENDIDEADDTEGKA).

Belongs to the RbfA family. As to quaternary structure, monomer. Binds 30S ribosomal subunits, but not 50S ribosomal subunits or 70S ribosomes.

It localises to the cytoplasm. In terms of biological role, one of several proteins that assist in the late maturation steps of the functional core of the 30S ribosomal subunit. Associates with free 30S ribosomal subunits (but not with 30S subunits that are part of 70S ribosomes or polysomes). Required for efficient processing of 16S rRNA. May interact with the 5'-terminal helix region of 16S rRNA. The protein is Ribosome-binding factor A of Shewanella sp. (strain MR-4).